The chain runs to 251 residues: Cell division protein ZapD (251 aa).

This sequence belongs to the ZapD family. Interacts with FtsZ.

The protein resides in the cytoplasm. Its function is as follows. Cell division factor that enhances FtsZ-ring assembly. Directly interacts with FtsZ and promotes bundling of FtsZ protofilaments, with a reduction in FtsZ GTPase activity. This Burkholderia lata (strain ATCC 17760 / DSM 23089 / LMG 22485 / NCIMB 9086 / R18194 / 383) protein is Cell division protein ZapD.